The following is a 1169-amino-acid chain: Transcription-repair-coupling factor (1169 aa).

A Helicase ATP-binding domain is found at 634–795 (DMERERPMDR…MLGVRDLSVI (162 aa)). Residue 647–654 (GDVGYGKT) coordinates ATP. A DEEQ box motif is present at residues 748–751 (DEEQ). The region spanning 809–970 (VLEQNSNFIK…GFKIAMRDLN (162 aa)) is the Helicase C-terminal domain.

In the N-terminal section; belongs to the UvrB family. This sequence in the C-terminal section; belongs to the helicase family. RecG subfamily.

It is found in the cytoplasm. Functionally, couples transcription and DNA repair by recognizing RNA polymerase (RNAP) stalled at DNA lesions. Mediates ATP-dependent release of RNAP and its truncated transcript from the DNA, and recruitment of nucleotide excision repair machinery to the damaged site. The sequence is that of Transcription-repair-coupling factor from Staphylococcus haemolyticus (strain JCSC1435).